Here is a 598-residue protein sequence, read N- to C-terminus: Elongation factor 4 (598 aa).

The region spanning 2 to 184 (KNIRNFSIIA…RLVKEIPAPE (183 aa)) is the tr-type G domain. GTP-binding positions include 14–19 (DHGKST) and 131–134 (NKID).

It belongs to the TRAFAC class translation factor GTPase superfamily. Classic translation factor GTPase family. LepA subfamily.

The protein resides in the cell inner membrane. It carries out the reaction GTP + H2O = GDP + phosphate + H(+). Its function is as follows. Required for accurate and efficient protein synthesis under certain stress conditions. May act as a fidelity factor of the translation reaction, by catalyzing a one-codon backward translocation of tRNAs on improperly translocated ribosomes. Back-translocation proceeds from a post-translocation (POST) complex to a pre-translocation (PRE) complex, thus giving elongation factor G a second chance to translocate the tRNAs correctly. Binds to ribosomes in a GTP-dependent manner. The protein is Elongation factor 4 of Proteus mirabilis (strain HI4320).